The primary structure comprises 107 residues: Glutaredoxin 4 (107 aa).

Residues 4–106 form the Glutaredoxin domain; that stretch reads LDKIKKQISE…TLLAEVAAKH (103 aa). Lys-21 contributes to the glutathione binding site. Cys-29 is a [2Fe-2S] cluster binding site. Glutathione contacts are provided by residues Arg-58, Phe-70, and 83–84; that span reads CD.

Belongs to the glutaredoxin family. Monothiol subfamily. As to quaternary structure, homodimer.

The protein localises to the cytoplasm. Its function is as follows. Monothiol glutaredoxin involved in the biogenesis of iron-sulfur clusters. The polypeptide is Glutaredoxin 4 (grxD) (Haemophilus influenzae (strain ATCC 51907 / DSM 11121 / KW20 / Rd)).